The primary structure comprises 375 residues: 23S rRNA (uracil(747)-C(5))-methyltransferase RlmC (375 aa).

[4Fe-4S] cluster is bound by residues cysteine 3, cysteine 11, cysteine 14, and cysteine 87. 4 residues coordinate S-adenosyl-L-methionine: glutamine 212, phenylalanine 241, glutamate 262, and asparagine 307. The active-site Nucleophile is the cysteine 334.

This sequence belongs to the class I-like SAM-binding methyltransferase superfamily. RNA M5U methyltransferase family. RlmC subfamily.

It carries out the reaction uridine(747) in 23S rRNA + S-adenosyl-L-methionine = 5-methyluridine(747) in 23S rRNA + S-adenosyl-L-homocysteine + H(+). Functionally, catalyzes the formation of 5-methyl-uridine at position 747 (m5U747) in 23S rRNA. This Salmonella dublin (strain CT_02021853) protein is 23S rRNA (uracil(747)-C(5))-methyltransferase RlmC.